The primary structure comprises 93 residues: Large ribosomal subunit protein uL23cz/uL23cy (93 aa).

The protein belongs to the universal ribosomal protein uL23 family. Part of the 50S ribosomal subunit.

It is found in the plastid. It localises to the chloroplast. Its function is as follows. Binds to 23S rRNA. The protein is Large ribosomal subunit protein uL23cz/uL23cy (rpl23-A) of Jasminum nudiflorum (Winter jasmine).